The following is a 556-amino-acid chain: Glypican-4 (556 aa).

An N-terminal signal peptide occupies residues 1–18; it reads MARFGLPALLCTLAVLSA. S357 is subject to Phosphoserine. O-linked (Xyl...) (glycosaminoglycan) serine glycans are attached at residues S494, S498, and S500. Residue N514 is glycosylated (N-linked (GlcNAc...) asparagine). The GPI-anchor amidated serine moiety is linked to residue S529. A propeptide spans 530–556 (removed in mature form); the sequence is AGVRPGAQAYLLTVFCILFLVMQREWR.

The protein belongs to the glypican family.

It is found in the cell membrane. Its subcellular location is the secreted. The protein resides in the extracellular space. Functionally, cell surface proteoglycan that bears heparan sulfate. May be involved in the development of kidney tubules and of the central nervous system. The polypeptide is Glypican-4 (GPC4) (Homo sapiens (Human)).